We begin with the raw amino-acid sequence, 404 residues long: DNA gyrase subunit B (404 aa).

The Toprim domain maps to Ser321–Asp404. Mg(2+) contacts are provided by Glu327, Asp400, and Asp402.

This sequence belongs to the type II topoisomerase GyrB family. Heterotetramer, composed of two GyrA and two GyrB chains. In the heterotetramer, GyrA contains the active site tyrosine that forms a transient covalent intermediate with DNA, while GyrB binds cofactors and catalyzes ATP hydrolysis. It depends on Mg(2+) as a cofactor. The cofactor is Mn(2+). Requires Ca(2+) as cofactor.

Its subcellular location is the cytoplasm. It carries out the reaction ATP-dependent breakage, passage and rejoining of double-stranded DNA.. Its function is as follows. A type II topoisomerase that negatively supercoils closed circular double-stranded (ds) DNA in an ATP-dependent manner to modulate DNA topology and maintain chromosomes in an underwound state. Negative supercoiling favors strand separation, and DNA replication, transcription, recombination and repair, all of which involve strand separation. Also able to catalyze the interconversion of other topological isomers of dsDNA rings, including catenanes and knotted rings. Type II topoisomerases break and join 2 DNA strands simultaneously in an ATP-dependent manner. This chain is DNA gyrase subunit B (gyrB), found in Bacillus mycoides.